An 856-amino-acid chain; its full sequence is DNA endonuclease RBBP8 (856 aa).

Residues 25 to 48 (ELWSKLKECHDKDLQELLMKIGKL) form an essential for binding to the MRN complex and for RPA focus formation on DNA damage region. Coiled coils occupy residues 38–87 (LQEL…EDRL) and 120–141 (ITEL…SEQL). 2 disordered regions span residues 143–174 (DMQK…DSPL) and 423–456 (DSEQ…DKEN). Residues 156–168 (ENPADTGDGEDGV) are compositionally biased toward acidic residues. Residues 493 to 515 (SSSRTKLTISLVPEKPDTKTILH) form a damage-recruitment motif region. A disordered region spans residues 695–732 (SPSQSISCKERSDIPSIENKKITSEKEHESKGEPYQKQ). The segment covering 702 to 730 (CKERSDIPSIENKKITSEKEHESKGEPYQ) has biased composition (basic and acidic residues). Thr-806 is modified (phosphothreonine). Position 818 is a phosphothreonine; by ATR (Thr-818).

This sequence belongs to the COM1/SAE2/CtIP family. In terms of assembly, homotetramer; formed by antiparallel association of helical extensions protruding from the N-termini of two parallel coiled-coil dimers. Interacts with the MRN complex; the interaction links DNA sensing to resection. Interacts with samhd1. Phosphorylation at Thr-818 by atr promotes recruitment to double-strand breaks (DSBs).

Its subcellular location is the nucleus. The protein localises to the chromosome. Endonuclease that cooperates with the MRE11-RAD50-NBN (MRN) complex in DNA-end resection, the first step of double-strand break (DSB) repair through the homologous recombination (HR) pathway. Functions downstream of the MRN complex and ATM, promotes ATR activation and its recruitment to DSBs in the S/G2 phase facilitating the generation of ssDNA. Specifically promotes the endonuclease activity of the MRN complex to clear DNA ends containing protein adducts: recruited to DSBs by nbn following phosphorylation, and promotes the endonuclease of mre11 to clear protein-DNA adducts and generate clean double-strand break ends. The MRN complex and rbbp8/CtIP are also required for chromosome alignment during metaphase. This chain is DNA endonuclease RBBP8 (rbbp8), found in Xenopus laevis (African clawed frog).